Here is a 583-residue protein sequence, read N- to C-terminus: Arginine--tRNA ligase (583 aa).

Residues 131–141 (ANPTGPMHVGH) carry the 'HIGH' region motif.

Belongs to the class-I aminoacyl-tRNA synthetase family. Monomer.

It is found in the cytoplasm. The catalysed reaction is tRNA(Arg) + L-arginine + ATP = L-arginyl-tRNA(Arg) + AMP + diphosphate. This Parvibaculum lavamentivorans (strain DS-1 / DSM 13023 / NCIMB 13966) protein is Arginine--tRNA ligase.